The chain runs to 592 residues: Condensin-2 complex subunit H2 (592 aa).

2 disordered regions span residues 89–116 (NKKR…DGCE) and 261–285 (EAPS…PKQL). Residues 96–108 (GSSSDGNQEQAPS) are compositionally biased toward polar residues.

Belongs to the CND2 H2 (condensin-2 subunit 2) family. Component of the condensin-2 complex, which contains the smc2 and smc4 heterodimer, and three non SMC subunits, ncapg2, ncaph2 and ncapd3 that probably regulate the complex.

The protein localises to the nucleus. In terms of biological role, regulatory subunit of the condensin-2 complex, a complex that seems to provide chromosomes with an additional level of organization and rigidity and in establishing mitotic chromosome architecture. The chain is Condensin-2 complex subunit H2 (ncaph2) from Danio rerio (Zebrafish).